The sequence spans 194 residues: ATP-dependent Clp protease proteolytic subunit (194 aa).

The active-site Nucleophile is Ser-98. The active site involves His-123.

Belongs to the peptidase S14 family. Fourteen ClpP subunits assemble into 2 heptameric rings which stack back to back to give a disk-like structure with a central cavity, resembling the structure of eukaryotic proteasomes.

Its subcellular location is the cytoplasm. It carries out the reaction Hydrolysis of proteins to small peptides in the presence of ATP and magnesium. alpha-casein is the usual test substrate. In the absence of ATP, only oligopeptides shorter than five residues are hydrolyzed (such as succinyl-Leu-Tyr-|-NHMec, and Leu-Tyr-Leu-|-Tyr-Trp, in which cleavage of the -Tyr-|-Leu- and -Tyr-|-Trp bonds also occurs).. Cleaves peptides in various proteins in a process that requires ATP hydrolysis. Has a chymotrypsin-like activity. Plays a major role in the degradation of misfolded proteins. This is ATP-dependent Clp protease proteolytic subunit from Sodalis glossinidius (strain morsitans).